Here is a 778-residue protein sequence, read N- to C-terminus: Exo-beta-D-glucosaminidase (778 aa).

Residues Tyr55, 104–105 (GE), 180–181 (DE), Glu308, Glu349, and Tyr381 each bind substrate. Catalysis depends on Glu181, which acts as the Proton donor. Glu349 serves as the catalytic Nucleophile.

It belongs to the glycosyl hydrolase 35 family. Homodimer.

Its subcellular location is the cytoplasm. It catalyses the reaction beta-D-glucosaminyl-(1-&gt;4)-N-acetyl-D-glucosamine + H2O = D-glucosamine + N-acetyl-D-glucosamine. It participates in glycan degradation; chitin degradation. Its function is as follows. Exo-type enzyme that specifically cleaves the non-reducing terminal glycosidic bond of chitooligosaccharides. Catalyzes the hydrolysis of GlcN-GlcNAc to glucosamine (GlcN) and N-acetylglucosamine (GlcNAc). Involved in chitin degradation. Can also hydrolyze chitosan and chitooligosaccharides of various chain lengths. In Pyrococcus horikoshii (strain ATCC 700860 / DSM 12428 / JCM 9974 / NBRC 100139 / OT-3), this protein is Exo-beta-D-glucosaminidase.